The sequence spans 529 residues: DNA polymerase lambda (529 aa).

One can recognise a BRCT domain in the interval 14–109 (DPEGMFAGMV…EKANEDLYVL (96 aa)). The segment at 119–199 (PKKSLPAISG…ESTSVYKPPD (81 aa)) is disordered. Residues 153 to 175 (SHSNTQGSPDSPTSCSVPSTSAS) are compositionally biased toward polar residues. The span at 182-193 (ETPTSPQSESTS) shows a compositional bias: low complexity. The tract at residues 213-227 (NIYRALGEDRRSFSY) is DNA-binding. The active site involves histidine 260. Positions 295 to 298 (GPAT) are DNA-binding. Residues arginine 336, 367–370 (SYRR), and 376–379 (GDLD) each bind dCTP. The tract at residues 370-379 (RGKATCGDLD) is involved in primer binding. Mn(2+) contacts are provided by aspartate 377, aspartate 379, and aspartate 444. The segment at 418 to 459 (EEGTDSGVDTYFGLCTYPGQELRRRIDFKVYPRDIYSFGLIA) is DNA-binding. Asparagine 467 lines the dCTP pocket.

Belongs to the DNA polymerase type-X family. In terms of assembly, interacts with the DNA repair proteins XRCC4 and LIG4. Interacts with HSP90-1. Requires Mn(2+) as cofactor.

It is found in the nucleus. The enzyme catalyses DNA(n) + a 2'-deoxyribonucleoside 5'-triphosphate = DNA(n+1) + diphosphate. Functionally, repair polymerase involved in base excision repair (BER) and responsible for repair of lesions that give rise to abasic (AP) sites in DNA. Has both DNA polymerase and terminal transferase activities. Has a 5'-deoxyribose-5-phosphate lyase (dRP lyase) activity. Involved in the repair of transposon-induced DNA double strand breaks (DSBs). Involved in repair of UV-B-mediated DNA damage during seedling development through an excision repair mechanism. Involved the repair of DSBs induced by high salinity and DNA cross-linking agent. Functions via the DNA non-homologous end joining (NHEJ) pathway. The chain is DNA polymerase lambda from Arabidopsis thaliana (Mouse-ear cress).